A 217-amino-acid chain; its full sequence is Probable GTP-binding protein EngB (217 aa).

An EngB-type G domain is found at 37-214 (AGIEVAFAGR…RAAMIRLLDE (178 aa)). Residues 45 to 52 (GRSNVGKS), 72 to 76 (GRTQE), 92 to 95 (DMPG), 159 to 162 (TKAD), and 193 to 195 (TSS) each bind GTP. 2 residues coordinate Mg(2+): serine 52 and threonine 74.

It belongs to the TRAFAC class TrmE-Era-EngA-EngB-Septin-like GTPase superfamily. EngB GTPase family. It depends on Mg(2+) as a cofactor.

Functionally, necessary for normal cell division and for the maintenance of normal septation. The protein is Probable GTP-binding protein EngB of Rhodopseudomonas palustris (strain BisB5).